A 279-amino-acid polypeptide reads, in one-letter code: Chromatin modification-related protein EAF5 (279 aa).

A disordered region spans residues 147–179 (QLQPHANAGKSGSAGTSATITTTTPHMAHSMDP). The span at 154-170 (AGKSGSAGTSATITTTT) shows a compositional bias: low complexity.

Belongs to the EAF5 family. In terms of assembly, component of the NuA4 histone acetyltransferase complex composed of at least ACT1, ARP4, YAF9, VID21, SWC4, EAF3, EAF5, EAF6, EAF7, EPL1, ESA1, TRA1 and YNG2.

The protein resides in the nucleus. Component of the NuA4 histone acetyltransferase complex which is involved in transcriptional activation of selected genes principally by acetylation of nucleosomal histone H4 and H2A. The NuA4 complex is also involved in DNA repair. This chain is Chromatin modification-related protein EAF5 (EAF5), found in Saccharomyces cerevisiae (strain ATCC 204508 / S288c) (Baker's yeast).